Reading from the N-terminus, the 495-residue chain is UDP-N-acetylmuramoyl-L-alanyl-D-glutamate--2,6-diaminopimelate ligase (495 aa).

UDP-N-acetyl-alpha-D-muramoyl-L-alanyl-D-glutamate contacts are provided by residues Leu27, Ser29, and 44 to 46 (HQT). 116–122 (GTNGKTT) serves as a coordination point for ATP. UDP-N-acetyl-alpha-D-muramoyl-L-alanyl-D-glutamate is bound by residues Asn157, 158-159 (TT), Ser185, Gln191, and Arg193. Lys225 bears the N6-carboxylysine mark. Meso-2,6-diaminopimelate contacts are provided by residues Arg390, 414–417 (DNPR), Gly465, and Glu469. The short motif at 414–417 (DNPR) is the Meso-diaminopimelate recognition motif element.

This sequence belongs to the MurCDEF family. MurE subfamily. The cofactor is Mg(2+). In terms of processing, carboxylation is probably crucial for Mg(2+) binding and, consequently, for the gamma-phosphate positioning of ATP.

Its subcellular location is the cytoplasm. It catalyses the reaction UDP-N-acetyl-alpha-D-muramoyl-L-alanyl-D-glutamate + meso-2,6-diaminopimelate + ATP = UDP-N-acetyl-alpha-D-muramoyl-L-alanyl-gamma-D-glutamyl-meso-2,6-diaminopimelate + ADP + phosphate + H(+). It functions in the pathway cell wall biogenesis; peptidoglycan biosynthesis. Catalyzes the addition of meso-diaminopimelic acid to the nucleotide precursor UDP-N-acetylmuramoyl-L-alanyl-D-glutamate (UMAG) in the biosynthesis of bacterial cell-wall peptidoglycan. The sequence is that of UDP-N-acetylmuramoyl-L-alanyl-D-glutamate--2,6-diaminopimelate ligase from Sodalis glossinidius (strain morsitans).